The following is a 274-amino-acid chain: Proteasome subunit beta (274 aa).

Positions 1–52 are cleaved as a propeptide — removed in mature form; by autocatalysis; it reads MPDPTGVAGRLPAVFMTPGTSSFTDFLSVAAPDLLPGARGPLPAPVTDAAHG. The Nucleophile role is filled by Thr-53.

It belongs to the peptidase T1B family. As to quaternary structure, the 20S proteasome core is composed of 14 alpha and 14 beta subunits that assemble into four stacked heptameric rings, resulting in a barrel-shaped structure. The two inner rings, each composed of seven catalytic beta subunits, are sandwiched by two outer rings, each composed of seven alpha subunits. The catalytic chamber with the active sites is on the inside of the barrel. Has a gated structure, the ends of the cylinder being occluded by the N-termini of the alpha-subunits. Is capped by the proteasome-associated ATPase, ARC.

It is found in the cytoplasm. It carries out the reaction Cleavage of peptide bonds with very broad specificity.. It functions in the pathway protein degradation; proteasomal Pup-dependent pathway. Its activity is regulated as follows. The formation of the proteasomal ATPase ARC-20S proteasome complex, likely via the docking of the C-termini of ARC into the intersubunit pockets in the alpha-rings, may trigger opening of the gate for substrate entry. Interconversion between the open-gate and close-gate conformations leads to a dynamic regulation of the 20S proteasome proteolysis activity. Component of the proteasome core, a large protease complex with broad specificity involved in protein degradation. This is Proteasome subunit beta from Parafrankia sp. (strain EAN1pec).